Consider the following 271-residue polypeptide: 60 kDa heat shock protein, mitochondrial (271 aa).

A phosphoserine mark is found at serine 30 and serine 33. Residue 50–54 (DGTTT) coordinates ATP. Lysine 83 carries the post-translational modification N6-acetyllysine. 3 positions are modified to N6-acetyllysine; alternate: lysine 84, lysine 97, and lysine 112. 3 positions are modified to N6-succinyllysine; alternate: lysine 84, lysine 97, and lysine 112. Lysine 125 carries the N6-acetyllysine modification. Lysine 126 carries the post-translational modification N6-acetyllysine; alternate. Residue lysine 126 is modified to N6-succinyllysine; alternate. At lysine 145 the chain carries N6-acetyllysine. Lysine 175 carries the post-translational modification N6-succinyllysine. Lysine 188 and lysine 237 each carry N6-acetyllysine. An ATP-binding site is contributed by glycine 257. Residue lysine 270 is modified to N6-acetyllysine.

Belongs to the chaperonin (HSP60) family. In terms of assembly, homoheptamer arranged in a ring structure. The functional units of these chaperonins consist of heptameric rings of the large subunit Hsp60, which function as a back-to-back double ring. Interacts with 2 heptameric Hsp10 rings to form the symmetrical football complex. Interacts with HRAS. Interacts with ATAD3A. Interacts with ETFBKMT and EEF1AKMT3. Interacts with MFHAS1. In terms of tissue distribution, detected at higher levels in caput epididymal spermatazoa than in cauda epididymal spermatazoa (at protein level).

Its subcellular location is the mitochondrion matrix. The catalysed reaction is ATP + H2O + a folded polypeptide = ADP + phosphate + an unfolded polypeptide.. Chaperonin implicated in mitochondrial protein import and macromolecular assembly. Together with Hsp10, facilitates the correct folding of imported proteins. May also prevent misfolding and promote the refolding and proper assembly of unfolded polypeptides generated under stress conditions in the mitochondrial matrix. The functional units of these chaperonins consist of heptameric rings of the large subunit Hsp60, which function as a back-to-back double ring. In a cyclic reaction, Hsp60 ring complexes bind one unfolded substrate protein per ring, followed by the binding of ATP and association with 2 heptameric rings of the co-chaperonin Hsp10. This leads to sequestration of the substrate protein in the inner cavity of Hsp60 where, for a certain period of time, it can fold undisturbed by other cell components. Synchronous hydrolysis of ATP in all Hsp60 subunits results in the dissociation of the chaperonin rings and the release of ADP and the folded substrate protein. The sequence is that of 60 kDa heat shock protein, mitochondrial from Mesocricetus auratus (Golden hamster).